The following is a 430-amino-acid chain: Tektin-2 (430 aa).

Coiled coils occupy residues 81-162 and 265-379; these read CLTD…FEKL and FRKR…DIAC.

This sequence belongs to the tektin family. As to quaternary structure, microtubule inner protein component of sperm flagellar doublet microtubules. May interact with CCDC172. Tyrosine phosphorylated. In terms of processing, ubiquitinated, leading to its degradation. Deubiquitinated by USP16, promoting its stability. In terms of tissue distribution, expressed in trachea multiciliated cells.

The protein resides in the cytoplasm. The protein localises to the cytoskeleton. Its subcellular location is the cilium axoneme. It localises to the flagellum axoneme. It is found in the microtubule organizing center. Microtubule inner protein (MIP) part of the dynein-decorated doublet microtubules (DMTs) in cilia and flagellar axoneme. Plays a key role in the assembly or attachment of the inner dynein arm to microtubules in sperm flagella and tracheal cilia. Forms filamentous polymers in the walls of ciliary and flagellar microtubules. The polypeptide is Tektin-2 (TEKT2) (Bos taurus (Bovine)).